The sequence spans 274 residues: MGMKFFNPVTPSSRGTVLVSKVGLSKDEPEKSLTSGKKSSGGRNNHGRITTRHRGGGHKKKYRVIDFKRNRSGQGIVEKIEYDPNRSGFLALISYKEDDIKSYILAPQGMKPGDVVTAGNDADILPGNCLLLKHIPVGSFVHNVELKPGNGAAIARAAGCYAQIVGRDGQYVLLRLRSGQIRLILSSCKATIGVVSNPDHKNRKLGKAGRSRWLGIRPTVRGVAMNPVDHPHGGGEGKTSGGRHPVTPWGVATKGKKTRKRNKSSDKYIKQLKG.

2 disordered regions span residues 21 to 59 and 223 to 274; these read KVGL…GGHK and VAMN…QLKG. Low complexity predominate over residues 32–42; sequence SLTSGKKSSGG. A compositionally biased stretch (basic residues) spans 45-59; sequence NHGRITTRHRGGGHK. Over residues 263–274 the composition is skewed to basic and acidic residues; the sequence is KSSDKYIKQLKG.

This sequence belongs to the universal ribosomal protein uL2 family. Part of the 50S ribosomal subunit. Forms a bridge to the 30S subunit in the 70S ribosome.

In terms of biological role, one of the primary rRNA binding proteins. Required for association of the 30S and 50S subunits to form the 70S ribosome, for tRNA binding and peptide bond formation. It has been suggested to have peptidyltransferase activity; this is somewhat controversial. Makes several contacts with the 16S rRNA in the 70S ribosome. In Wolbachia sp. subsp. Drosophila simulans (strain wRi), this protein is Large ribosomal subunit protein uL2.